The chain runs to 317 residues: tRNA pseudouridine synthase B (317 aa).

Catalysis depends on aspartate 47, which acts as the Nucleophile.

Belongs to the pseudouridine synthase TruB family. Type 1 subfamily.

The catalysed reaction is uridine(55) in tRNA = pseudouridine(55) in tRNA. Its function is as follows. Responsible for synthesis of pseudouridine from uracil-55 in the psi GC loop of transfer RNAs. This chain is tRNA pseudouridine synthase B, found in Vibrio atlanticus (strain LGP32) (Vibrio splendidus (strain Mel32)).